A 331-amino-acid chain; its full sequence is Lipoyl synthase (331 aa).

The segment at 1 to 20 (MTTETNPAVTPAYNPSEKQK) is disordered. [4Fe-4S] cluster contacts are provided by cysteine 71, cysteine 76, cysteine 82, cysteine 97, cysteine 101, cysteine 104, and serine 311. The region spanning 82 to 300 (CFGKGTATFM…EEEAYKMGFA (219 aa)) is the Radical SAM core domain.

It belongs to the radical SAM superfamily. Lipoyl synthase family. [4Fe-4S] cluster serves as cofactor.

The protein localises to the cytoplasm. The catalysed reaction is [[Fe-S] cluster scaffold protein carrying a second [4Fe-4S](2+) cluster] + N(6)-octanoyl-L-lysyl-[protein] + 2 oxidized [2Fe-2S]-[ferredoxin] + 2 S-adenosyl-L-methionine + 4 H(+) = [[Fe-S] cluster scaffold protein] + N(6)-[(R)-dihydrolipoyl]-L-lysyl-[protein] + 4 Fe(3+) + 2 hydrogen sulfide + 2 5'-deoxyadenosine + 2 L-methionine + 2 reduced [2Fe-2S]-[ferredoxin]. It functions in the pathway protein modification; protein lipoylation via endogenous pathway; protein N(6)-(lipoyl)lysine from octanoyl-[acyl-carrier-protein]: step 2/2. Functionally, catalyzes the radical-mediated insertion of two sulfur atoms into the C-6 and C-8 positions of the octanoyl moiety bound to the lipoyl domains of lipoate-dependent enzymes, thereby converting the octanoylated domains into lipoylated derivatives. The protein is Lipoyl synthase of Janthinobacterium sp. (strain Marseille) (Minibacterium massiliensis).